Here is a 195-residue protein sequence, read N- to C-terminus: Imidazole glycerol phosphate synthase subunit HisH (195 aa).

The region spanning 1-195 is the Glutamine amidotransferase type-1 domain; the sequence is MIAVVDLGIG…LRLLENFRRL (195 aa). The active-site Nucleophile is the Cys-72. Active-site residues include His-177 and Glu-179.

Heterodimer of HisH and HisF.

Its subcellular location is the cytoplasm. The catalysed reaction is 5-[(5-phospho-1-deoxy-D-ribulos-1-ylimino)methylamino]-1-(5-phospho-beta-D-ribosyl)imidazole-4-carboxamide + L-glutamine = D-erythro-1-(imidazol-4-yl)glycerol 3-phosphate + 5-amino-1-(5-phospho-beta-D-ribosyl)imidazole-4-carboxamide + L-glutamate + H(+). It catalyses the reaction L-glutamine + H2O = L-glutamate + NH4(+). The protein operates within amino-acid biosynthesis; L-histidine biosynthesis; L-histidine from 5-phospho-alpha-D-ribose 1-diphosphate: step 5/9. Functionally, IGPS catalyzes the conversion of PRFAR and glutamine to IGP, AICAR and glutamate. The HisH subunit catalyzes the hydrolysis of glutamine to glutamate and ammonia as part of the synthesis of IGP and AICAR. The resulting ammonia molecule is channeled to the active site of HisF. This chain is Imidazole glycerol phosphate synthase subunit HisH, found in Thermococcus kodakarensis (strain ATCC BAA-918 / JCM 12380 / KOD1) (Pyrococcus kodakaraensis (strain KOD1)).